A 426-amino-acid chain; its full sequence is Serine--tRNA ligase (426 aa).

228–230 (TSE) is an L-serine binding site. Residues 259–261 (RRE) and valine 275 each bind ATP. L-serine is bound at residue glutamate 282. Residue 346–349 (ELTS) participates in ATP binding. Residue threonine 386 coordinates L-serine.

It belongs to the class-II aminoacyl-tRNA synthetase family. Type-1 seryl-tRNA synthetase subfamily. As to quaternary structure, homodimer. The tRNA molecule binds across the dimer.

It localises to the cytoplasm. The catalysed reaction is tRNA(Ser) + L-serine + ATP = L-seryl-tRNA(Ser) + AMP + diphosphate + H(+). It carries out the reaction tRNA(Sec) + L-serine + ATP = L-seryl-tRNA(Sec) + AMP + diphosphate + H(+). It participates in aminoacyl-tRNA biosynthesis; selenocysteinyl-tRNA(Sec) biosynthesis; L-seryl-tRNA(Sec) from L-serine and tRNA(Sec): step 1/1. Catalyzes the attachment of serine to tRNA(Ser). Is also able to aminoacylate tRNA(Sec) with serine, to form the misacylated tRNA L-seryl-tRNA(Sec), which will be further converted into selenocysteinyl-tRNA(Sec). This is Serine--tRNA ligase from Arthrobacter sp. (strain FB24).